The chain runs to 92 residues: Alpha-conotoxin-like Rt20.2 (92 aa).

The signal sequence occupies residues 1 to 24 (MPKLEMMLLVLLILPLSYFSAAGG). The propeptide occupies 25 to 45 (QVVQGDLHSDVLARYLQRGDR). Glu-49 bears the 4-carboxyglutamate mark. Pro-55 is subject to 4-hydroxyproline. 4 cysteine pairs are disulfide-bonded: Cys-63-Cys-72, Cys-68-Cys-80, Cys-73-Cys-90, and Cys-78-Cys-92.

It belongs to the conotoxin D superfamily. As to quaternary structure, hetero-, homo- or pseudo-homodimer (identical sequence, different post-translational modifications). As to expression, expressed by the venom duct.

It localises to the secreted. In terms of biological role, alpha-conotoxins act on postsynaptic membranes, they bind to the nicotinic acetylcholine receptors (nAChR) and thus inhibit them. Through its two C-terminal domains, this homodimeric protein would bind to two nAChR allosteric sites, located outside the nAChR C-loop of the principal binding face and at the adjacent binding interface in a clockwise direction. This toxin specifically blocks mammalian neuronal nAChR of the alpha-7/CHRNA7, alpha-3-beta-2/CHRNA3-CHRNB2 and alpha-4-beta-2/CHRNA4-CHRNB2 subtypes. This is Alpha-conotoxin-like Rt20.2 from Conus rattus (Rat cone).